The chain runs to 112 residues: Probable insulin-like peptide beta-type 5 (112 aa).

The signal sequence occupies residues Met1–Ser19. Residues Phe20 to Arg58 constitute a propeptide, removed; by convertase egl-3. Disulfide bonds link Cys68-Cys97, Cys80-Cys110, Cys84-Cys111, and Cys96-Cys101.

It belongs to the insulin family. In terms of processing, may be processed by serine endoprotease bli-4. As to expression, expressed by ASI and ASJ sensory neurons.

The protein localises to the secreted. In terms of biological role, probable insulin-like peptide which negatively regulates synapse development at the neuromuscular junctions. Probably acts as a daf-2/InsR agonist ligand to prevent dauer formation under optimal environmental conditions. Acts on AWC sensory neurons to regulate high salt chemotaxis responses. In Caenorhabditis elegans, this protein is Probable insulin-like peptide beta-type 5 (ins-6).